The chain runs to 443 residues: Structure-specific endonuclease subunit SLX1 (443 aa).

One can recognise a GIY-YIG domain in the interval 13–93; sequence RVYVCYCLRS…QKPHASRHLR (81 aa). The interval 121–140 is disordered; that stretch reads FPATRSSAPSSAASHDSGLN. The SLX1-type zinc-finger motif lies at 361-419; sequence CGLCGGHINRHVPLSYTHCPHACDAVFHLTCLARYSLEQETRAHARTFCLPTSAWCPMC.

The protein belongs to the SLX1 family. Forms a heterodimer with SLX4. The cofactor is a divalent metal cation.

It localises to the nucleus. Its function is as follows. Catalytic subunit of the SLX1-SLX4 structure-specific endonuclease that resolves DNA secondary structures generated during DNA repair and recombination. Has endonuclease activity towards branched DNA substrates, introducing single-strand cuts in duplex DNA close to junctions with ss-DNA. The polypeptide is Structure-specific endonuclease subunit SLX1 (Malassezia globosa (strain ATCC MYA-4612 / CBS 7966) (Dandruff-associated fungus)).